Reading from the N-terminus, the 413-residue chain is Zona pellucida-like domain-containing protein 1 (413 aa).

A signal peptide spans 1–19 (MEQICLIILLISKALSVGA). At glutamine 20 the chain carries Pyrrolidone carboxylic acid. The Extracellular segment spans residues 20 to 370 (QFNGYNCDAN…PVFRMNTVTS (351 aa)). The region spanning 43 to 320 (YCGVQTITLK…PICGSRKKRD (278 aa)) is the ZP domain. 2 cysteine pairs are disulfide-bonded: cysteine 44–cysteine 155 and cysteine 79–cysteine 104. Asparagine 85, asparagine 121, asparagine 129, asparagine 164, asparagine 181, and asparagine 194 each carry an N-linked (GlcNAc...) asparagine glycan. Intrachain disulfides connect cysteine 235/cysteine 296 and cysteine 255/cysteine 313. Residue asparagine 351 is glycosylated (N-linked (GlcNAc...) asparagine). The helical transmembrane segment at 371-391 (ALISGIIILGVMSLCFFILSL) threads the bilayer. At 392-413 (TLLKGKRAPPTILSGARNPAFN) the chain is on the cytoplasmic side.

Post-translationally, proteolytically cleaved before the transmembrane segment to yield the secreted form found in the extracellular matrix of the cupula. In terms of processing, N-glycosylated. Detected in the acellular cupulae of the vestibular organ, and also in support cells adjacent to the cupula (at protein level).

Its subcellular location is the cytoplasmic vesicle membrane. The protein resides in the secreted. The protein localises to the extracellular space. It localises to the extracellular matrix. Functionally, glycoprotein which is a component of the gelatinous extracellular matrix in the cupulae of the vestibular organ. The polypeptide is Zona pellucida-like domain-containing protein 1 (Salmo salar (Atlantic salmon)).